The chain runs to 666 residues: tRNA 5-methylaminomethyl-2-thiouridine biosynthesis bifunctional protein MnmC (666 aa).

A tRNA (mnm(5)s(2)U34)-methyltransferase region spans residues Met1 to Glu245. Positions Ile270–Lys666 are FAD-dependent cmnm(5)s(2)U34 oxidoreductase.

The protein in the N-terminal section; belongs to the methyltransferase superfamily. tRNA (mnm(5)s(2)U34)-methyltransferase family. In the C-terminal section; belongs to the DAO family. FAD is required as a cofactor.

It localises to the cytoplasm. It carries out the reaction 5-aminomethyl-2-thiouridine(34) in tRNA + S-adenosyl-L-methionine = 5-methylaminomethyl-2-thiouridine(34) in tRNA + S-adenosyl-L-homocysteine + H(+). In terms of biological role, catalyzes the last two steps in the biosynthesis of 5-methylaminomethyl-2-thiouridine (mnm(5)s(2)U) at the wobble position (U34) in tRNA. Catalyzes the FAD-dependent demodification of cmnm(5)s(2)U34 to nm(5)s(2)U34, followed by the transfer of a methyl group from S-adenosyl-L-methionine to nm(5)s(2)U34, to form mnm(5)s(2)U34. The chain is tRNA 5-methylaminomethyl-2-thiouridine biosynthesis bifunctional protein MnmC from Salmonella paratyphi B (strain ATCC BAA-1250 / SPB7).